The chain runs to 269 residues: MTQATPQRIAIAGASGRMGQMLIEAVLDTEGVELAVALDRAGSPSIGQDAGAALGRPCGVTITDQLDALAQADCLIDFTRPEGTLQHLQACLRHDVKMVIGTTGFDSSGRAEIKVAAQKIAIVFAPNMSVGVNATLKLLDMAARILNSGYDVEIFEAHHRNKVDAPSGTALIMGETVASAWDVALPDVATWTRHGDTGVRKPGTIGFSVVRGGDIVGDHTVFFCGTGERIEISHRSSSRATYAQGAVRAARFLARQDNGLYDMQAVLGL.

NAD(+)-binding positions include 13–18 and D39; that span reads GASGRM. R40 is a binding site for NADP(+). Residues 101 to 103 and 125 to 128 each bind NAD(+); these read GTT and APNM. The active-site Proton donor/acceptor is H158. H159 serves as a coordination point for (S)-2,3,4,5-tetrahydrodipicolinate. K162 acts as the Proton donor in catalysis. 168–169 lines the (S)-2,3,4,5-tetrahydrodipicolinate pocket; it reads GT.

Belongs to the DapB family.

The protein resides in the cytoplasm. The enzyme catalyses (S)-2,3,4,5-tetrahydrodipicolinate + NAD(+) + H2O = (2S,4S)-4-hydroxy-2,3,4,5-tetrahydrodipicolinate + NADH + H(+). It catalyses the reaction (S)-2,3,4,5-tetrahydrodipicolinate + NADP(+) + H2O = (2S,4S)-4-hydroxy-2,3,4,5-tetrahydrodipicolinate + NADPH + H(+). It participates in amino-acid biosynthesis; L-lysine biosynthesis via DAP pathway; (S)-tetrahydrodipicolinate from L-aspartate: step 4/4. Its function is as follows. Catalyzes the conversion of 4-hydroxy-tetrahydrodipicolinate (HTPA) to tetrahydrodipicolinate. The chain is 4-hydroxy-tetrahydrodipicolinate reductase from Bordetella pertussis (strain Tohama I / ATCC BAA-589 / NCTC 13251).